The primary structure comprises 607 residues: Guanine nucleotide-binding protein-like 1 (607 aa).

Basic residues predominate over residues 1–14 (MPRKKPFSVKQKKK). Residues 1–81 (MPRKKPFSVK…GPRGYDPNRY (81 aa)) form a disordered region. Residues 15–26 (QLQDKRERKRGL) are compositionally biased toward basic and acidic residues. 3 positions are modified to phosphoserine: serine 32, serine 33, and serine 34. 2 positions are modified to phosphothreonine: threonine 48 and threonine 50. A phosphoserine mark is found at serine 51 and serine 68. One can recognise a CP-type G domain in the interval 178–418 (WRQLWRVLEM…LCDCPGLIFP (241 aa)). GTP is bound at residue 225 to 228 (NKVD). Serine 324 is modified (phosphoserine). Residues 367 to 374 (GFPNVGKS) and 411 to 415 (DCPGL) contribute to the GTP site. Residues 547–607 (GPAGDEEEEE…PYALLGEDEC (61 aa)) form a disordered region. Over residues 550–584 (GDEEEEEEEELSSSCEEEGEEDRDADEEGEGDEET) the composition is skewed to acidic residues. Residues serine 561, serine 562, and serine 563 each carry the phosphoserine modification.

Belongs to the TRAFAC class YlqF/YawG GTPase family.

Functionally, possible regulatory or functional link with the histocompatibility cluster. This Pan troglodytes (Chimpanzee) protein is Guanine nucleotide-binding protein-like 1 (GNL1).